The sequence spans 180 residues: Alpha-S2-casein-like A (180 aa).

Residues 1 to 15 (MRFFVFTCLLAVALA) form the signal peptide. S23 and S25 each carry phosphoserine. Residues 46–66 (PTNQETPSVSSSEESVEVQTE) are disordered.

It belongs to the alpha-casein family. Mammary gland specific. Secreted in milk.

The protein resides in the secreted. Important role in the capacity of milk to transport calcium phosphate. The chain is Alpha-S2-casein-like A (CSN1S2A) from Oryctolagus cuniculus (Rabbit).